A 728-amino-acid chain; its full sequence is 1,4-alpha-glucan branching enzyme GlgB (728 aa).

Asp-409 serves as the catalytic Nucleophile. Glu-462 serves as the catalytic Proton donor.

Belongs to the glycosyl hydrolase 13 family. GlgB subfamily. As to quaternary structure, monomer.

It catalyses the reaction Transfers a segment of a (1-&gt;4)-alpha-D-glucan chain to a primary hydroxy group in a similar glucan chain.. Its pathway is glycan biosynthesis; glycogen biosynthesis. Its function is as follows. Catalyzes the formation of the alpha-1,6-glucosidic linkages in glycogen by scission of a 1,4-alpha-linked oligosaccharide from growing alpha-1,4-glucan chains and the subsequent attachment of the oligosaccharide to the alpha-1,6 position. The sequence is that of 1,4-alpha-glucan branching enzyme GlgB from Cereibacter sphaeroides (strain ATCC 17023 / DSM 158 / JCM 6121 / CCUG 31486 / LMG 2827 / NBRC 12203 / NCIMB 8253 / ATH 2.4.1.) (Rhodobacter sphaeroides).